The primary structure comprises 403 residues: Accessory Sec system protein translocase subunit SecY2 (403 aa).

10 helical membrane-spanning segments follow: residues 17–37 (MLYTCFILFIYILGTNISIVS), 63–83 (LNIFTLGLGPWLTSMIILMLI), 105–125 (ILTLILSVIQSYFVIHEYVSK), 131–151 (DNIYLTILILVTGTMLLVWLA), 157–177 (YGIAGPMPIVMVSIIKSMMHQ), 186–206 (HIVIALLIILVIITLFILLFI), 240–260 (ITLMMSISAFVFLKSGIHFIL), 276–296 (FDSPVGISVYLVIQMLLGYFL), 339–359 (WFGLALVTVIIGIPLYFTLFV), and 366–386 (IYFSVQLIVLVYISINIAETI).

Belongs to the SecY/SEC61-alpha family. SecY2 subfamily. May form heterotrimers with SecE and SecG subunits (Potential). Component of the accessory SecA2/SecY2 protein translocase complex required to export cell wall protein SrpA.

Its subcellular location is the cell membrane. In terms of biological role, the central subunit of a protein translocation channel (Potential). Part of the accessory SecA2/SecY2 system specifically required to export SraP, a serine-rich repeat cell wall protein encoded upstream in the same operon. This Staphylococcus aureus (strain NCTC 8325 / PS 47) protein is Accessory Sec system protein translocase subunit SecY2.